The sequence spans 340 residues: Ketol-acid reductoisomerase (NADP(+)) (340 aa).

The KARI N-terminal Rossmann domain occupies 1–183 (MAITVYYDKD…GGGRTGIIET (183 aa)). NADP(+) contacts are provided by residues 26–29 (FGSQ), R49, S52, S54, and 84–87 (DEIQ). The active site involves H109. G135 is a binding site for NADP(+). One can recognise a KARI C-terminal knotted domain in the interval 184–329 (TFKAETETDL…RNLRAMMPWI (146 aa)). 4 residues coordinate Mg(2+): D192, E196, E228, and E232. S253 is a substrate binding site.

The protein belongs to the ketol-acid reductoisomerase family. Mg(2+) is required as a cofactor.

The enzyme catalyses (2R)-2,3-dihydroxy-3-methylbutanoate + NADP(+) = (2S)-2-acetolactate + NADPH + H(+). The catalysed reaction is (2R,3R)-2,3-dihydroxy-3-methylpentanoate + NADP(+) = (S)-2-ethyl-2-hydroxy-3-oxobutanoate + NADPH + H(+). The protein operates within amino-acid biosynthesis; L-isoleucine biosynthesis; L-isoleucine from 2-oxobutanoate: step 2/4. It participates in amino-acid biosynthesis; L-valine biosynthesis; L-valine from pyruvate: step 2/4. Functionally, involved in the biosynthesis of branched-chain amino acids (BCAA). Catalyzes an alkyl-migration followed by a ketol-acid reduction of (S)-2-acetolactate (S2AL) to yield (R)-2,3-dihydroxy-isovalerate. In the isomerase reaction, S2AL is rearranged via a Mg-dependent methyl migration to produce 3-hydroxy-3-methyl-2-ketobutyrate (HMKB). In the reductase reaction, this 2-ketoacid undergoes a metal-dependent reduction by NADPH to yield (R)-2,3-dihydroxy-isovalerate. The chain is Ketol-acid reductoisomerase (NADP(+)) from Campylobacter jejuni subsp. jejuni serotype O:6 (strain 81116 / NCTC 11828).